We begin with the raw amino-acid sequence, 1205 residues long: Nitric oxide synthase 3 (1205 aa).

The tract at residues 1–73 (MGNLKSVGQE…PPEGPKFPRV (73 aa)) is disordered. Gly-2 carries N-myristoyl glycine lipidation. S-palmitoyl cysteine attachment occurs at residues Cys-15 and Cys-26. The segment covering 15–27 (CGLGLGLGLGLCG) has biased composition (gly residues). Positions 33–47 (TPAPEPSRAPAPATP) are enriched in pro residues. Residues Cys-96 and Cys-101 each contribute to the Zn(2+) site. An interaction with NOSIP region spans residues 100–488 (RCLGSLVLPR…PDPWKGSAAK (389 aa)). (6R)-L-erythro-5,6,7,8-tetrahydrobiopterin is bound at residue Ser-104. Phosphoserine; by CDK5 is present on Ser-116. Cys-186 lines the heme b pocket. L-arginine contacts are provided by Gln-249, Trp-358, Tyr-359, Glu-363, and Asn-368. (6R)-L-erythro-5,6,7,8-tetrahydrobiopterin-binding residues include Ala-448, Trp-449, and Phe-462. A heme b-binding site is contributed by Tyr-477. The calmodulin-binding stretch occupies residues 492 to 512 (IARKKTFKEVANAVKISASLM). Thr-497 carries the post-translational modification Phosphothreonine; by AMPK. Positions 522 to 705 (ASILYASETV…AFRGWAQAAF (184 aa)) constitute a Flavodoxin-like domain. 6 residues coordinate FMN: Ser-528, Glu-529, Thr-530, Arg-532, Ser-574, and Thr-575. Phosphoserine occurs at positions 617, 635, and 640. Ser-656, Cys-663, Glu-689, and Gln-693 together coordinate FMN. In terms of domain architecture, FAD-binding FR-type spans 758–1004 (RKMFQATVLS…IRAAPSFRLP (247 aa)). Residue Arg-778 coordinates NADP(+). Position 800 (His-800) interacts with FAD. Positions 820 to 848 (EDPTPPTESVGVEQLEKGSPGGPPPSWVR) are disordered. A Phosphoserine modification is found at Ser-838. FAD is bound by residues Arg-940, Tyr-942, Ser-943, Thr-958, Ala-960, Tyr-964, Val-977, Cys-978, and Ser-979. The NADP(+) site is built by Thr-1018, Arg-1051, Ser-1080, Arg-1081, Lys-1087, Tyr-1089, and Gln-1091. Thr-1177 carries the phosphothreonine modification. Ser-1179 bears the Phosphoserine; by AMPK mark. Residue Ser-1181 is modified to Phosphoserine.

It belongs to the NOS family. In terms of assembly, homodimer. Interacts with NOSIP and NOSTRIN. Interacts with HSP90AB1. Forms a complex with ASL, ASS1 and SLC7A1; the complex regulates cell-autonomous L-arginine synthesis and citrulline recycling while channeling extracellular L-arginine to nitric oxide synthesis pathway. It depends on heme b as a cofactor. The cofactor is FAD. FMN is required as a cofactor. (6R)-L-erythro-5,6,7,8-tetrahydrobiopterin serves as cofactor. Post-translationally, phosphorylation by AMPK at Ser-1179 in the presence of Ca(2+)-calmodulin (CaM) activates activity. In absence of Ca(2+)-calmodulin, AMPK also phosphorylates Thr-497, resulting in inhibition of activity. Phosphorylation of Ser-116 by CDK5 reduces activity.

The protein resides in the membrane. Its subcellular location is the caveola. The protein localises to the cytoplasm. It is found in the cytoskeleton. It localises to the golgi apparatus. The protein resides in the cell membrane. The enzyme catalyses 2 L-arginine + 3 NADPH + 4 O2 + H(+) = 2 L-citrulline + 2 nitric oxide + 3 NADP(+) + 4 H2O. With respect to regulation, stimulated by calcium/calmodulin. Inhibited by NOSIP and NOSTRIN. Produces nitric oxide (NO) which is implicated in vascular smooth muscle relaxation through a cGMP-mediated signal transduction pathway. NO mediates vascular endothelial growth factor (VEGF)-induced angiogenesis in coronary vessels and promotes blood clotting through the activation of platelets. The chain is Nitric oxide synthase 3 (NOS3) from Sus scrofa (Pig).